We begin with the raw amino-acid sequence, 366 residues long: Tetraacyldisaccharide 4'-kinase (366 aa).

R62 to T69 lines the ATP pocket.

This sequence belongs to the LpxK family.

The enzyme catalyses a lipid A disaccharide + ATP = a lipid IVA + ADP + H(+). The protein operates within glycolipid biosynthesis; lipid IV(A) biosynthesis; lipid IV(A) from (3R)-3-hydroxytetradecanoyl-[acyl-carrier-protein] and UDP-N-acetyl-alpha-D-glucosamine: step 6/6. Its function is as follows. Transfers the gamma-phosphate of ATP to the 4'-position of a tetraacyldisaccharide 1-phosphate intermediate (termed DS-1-P) to form tetraacyldisaccharide 1,4'-bis-phosphate (lipid IVA). The sequence is that of Tetraacyldisaccharide 4'-kinase from Polynucleobacter necessarius subsp. necessarius (strain STIR1).